The primary structure comprises 360 residues: MLVWLAEHLVKYYSGFNVFSYLTFRAIVSLLTALFISLWMGPRMIAHLQKLSFGQVVRNDGPESHFSKRGTPTMGGIMILTAIVISVLLWAYPSNPYVWCVLVVLVGYGIIGFVDDYRKVVRKDTKGLIARWKYFWMSVIALGVAFALYLAGKDTPATQLVVPFFKDVMPQLGLFYILLAYFVIVGTGNAVNLTDGLDGLAIMPTVFVAGGFALVAWATGNMNFASYLHIPYLRHAGELVIVCTAIVGAGLGFLWFNTYPAQVFMGDVGSLALGGALGIIAVLLRQEFLLVIMGGVFVVETLSVILQVGSFKLRGQRIFRMAPIHHHYELKGWPEPRVIVRFWIISLMLVLIGLATLKVR.

Residues methionine 1–arginine 25 lie on the Periplasmic side of the membrane. The chain crosses the membrane as a helical span at residues alanine 26–alanine 46. The Cytoplasmic portion of the chain corresponds to histidine 47–threonine 71. Residues proline 72–tyrosine 92 form a helical membrane-spanning segment. A topological domain (periplasmic) is located at residue proline 93. A helical membrane pass occupies residues serine 94–valine 114. Over aspartate 115–arginine 131 the chain is Cytoplasmic. The helical transmembrane segment at tryptophan 132–glycine 152 threads the bilayer. At lysine 153–aspartate 167 the chain is on the periplasmic side. Residues valine 168–glycine 188 traverse the membrane as a helical segment. Residues asparagine 189–aspartate 198 are Cytoplasmic-facing. The chain crosses the membrane as a helical span at residues glycine 199–threonine 219. Residues glycine 220–histidine 235 are Periplasmic-facing. The helical transmembrane segment at alanine 236–phenylalanine 256 threads the bilayer. The Cytoplasmic segment spans residues asparagine 257–glutamine 262. Residues valine 263 to leucine 283 form a helical membrane-spanning segment. At leucine 284–glutamate 287 the chain is on the periplasmic side. A helical membrane pass occupies residues phenylalanine 288–valine 308. Topologically, residues glycine 309–arginine 337 are cytoplasmic. A helical membrane pass occupies residues valine 338–lysine 358. Over valine 359–arginine 360 the chain is Periplasmic.

Belongs to the glycosyltransferase 4 family. MraY subfamily. The cofactor is Mg(2+).

The protein localises to the cell inner membrane. It carries out the reaction UDP-N-acetyl-alpha-D-muramoyl-L-alanyl-gamma-D-glutamyl-meso-2,6-diaminopimeloyl-D-alanyl-D-alanine + di-trans,octa-cis-undecaprenyl phosphate = di-trans,octa-cis-undecaprenyl diphospho-N-acetyl-alpha-D-muramoyl-L-alanyl-D-glutamyl-meso-2,6-diaminopimeloyl-D-alanyl-D-alanine + UMP. Its pathway is cell wall biogenesis; peptidoglycan biosynthesis. Catalyzes the initial step of the lipid cycle reactions in the biosynthesis of the cell wall peptidoglycan: transfers peptidoglycan precursor phospho-MurNAc-pentapeptide from UDP-MurNAc-pentapeptide onto the lipid carrier undecaprenyl phosphate, yielding undecaprenyl-pyrophosphoryl-MurNAc-pentapeptide, known as lipid I. This is Phospho-N-acetylmuramoyl-pentapeptide-transferase from Escherichia coli O7:K1 (strain IAI39 / ExPEC).